The primary structure comprises 210 residues: Thymidylate kinase (210 aa).

16–23 (GGDGVGKS) lines the ATP pocket.

Belongs to the thymidylate kinase family.

The catalysed reaction is dTMP + ATP = dTDP + ADP. Functionally, phosphorylation of dTMP to form dTDP in both de novo and salvage pathways of dTTP synthesis. This chain is Thymidylate kinase, found in Leifsonia xyli subsp. xyli (strain CTCB07).